We begin with the raw amino-acid sequence, 428 residues long: Aminotransferase verI (428 aa).

Position 254 is an N6-(pyridoxal phosphate)lysine (lysine 254).

It belongs to the class-I pyridoxal-phosphate-dependent aminotransferase family. Pyridoxal 5'-phosphate serves as cofactor.

It participates in mycotoxin biosynthesis. In terms of biological role, aminotransferase; part of the gene cluster that mediates the biosynthesis of 11'-deoxyverticillin A, one of the dimeric epipolythiodioxopiperazines (ETPs) from the verticillin family that act as mycotoxins. 11'-deoxyverticillin A is required for normal conidiation. The nonribosomal peptide synthetase verP is speculated to be responsible for condensation of amino acids to form the carbon skeleton of verticillin, whereas the cluster-specific tailoring enzymes are involved in further modifications leading to the production of 11'-deoxyverticillin A. In Clonostachys rogersoniana, this protein is Aminotransferase verI.